The sequence spans 206 residues: Ras-related protein Rab-18 (206 aa).

An N-acetylmethionine modification is found at Met-1. Positions 17, 20, 21, 22, 23, 34, 35, 40, 66, 123, and 125 each coordinate GTP. Residue Ser-22 participates in Mg(2+) binding. 2 consecutive short sequence motifs (switch) follow at residues 31 to 45 (DTFDPELAATIGVDF) and 63 to 80 (DTAGQERFRTLTPSYYRG). Thr-40 is a Mg(2+) binding site. Ser-144 carries the post-translational modification Phosphoserine. Ala-152 lines the GTP pocket. A lipid anchor (S-palmitoyl cysteine) is attached at Cys-199. Residue Cys-203 is modified to Cysteine methyl ester. Cys-203 carries S-geranylgeranyl cysteine lipidation. The propeptide at 204-206 (SVL) is removed in mature form.

The protein belongs to the small GTPase superfamily. Rab family. As to quaternary structure, interacts (in GTP-bound form) with ZFYVE1. Interacts with ZW10 and this interaction is enhanced in the presence of ZFYVE1. Interacts with BSCL2. Mg(2+) serves as cofactor.

Its subcellular location is the endoplasmic reticulum membrane. It localises to the golgi apparatus. The protein localises to the cis-Golgi network membrane. It is found in the lipid droplet. The protein resides in the apical cell membrane. It carries out the reaction GTP + H2O = GDP + phosphate + H(+). With respect to regulation, regulated by guanine nucleotide exchange factors (GEFs) which promote the exchange of bound GDP for free GTP. Regulated by GTPase activating proteins (GAPs) which increase the GTP hydrolysis activity at the ER membrane. Inhibited by GDP dissociation inhibitors (GDIs) which prevent Rab-GDP dissociation. In terms of biological role, the small GTPases Rab are key regulators of intracellular membrane trafficking, from the formation of transport vesicles to their fusion with membranes. Rabs cycle between an inactive GDP-bound form and an active GTP-bound form that is able to recruit to membranes different sets of downstream effectors directly responsible for vesicle formation, movement, tethering and fusion. RAB18 is required for the localization of ZFYVE1 to lipid droplets and for its function in mediating the formation of endoplasmic reticulum-lipid droplets (ER-LD) contacts. Also required for maintaining endoplasmic reticulum structure. Plays a role in apical endocytosis/recycling. Plays a key role in eye and brain development and neurodegeneration. The protein is Ras-related protein Rab-18 (RAB18) of Bos taurus (Bovine).